An 860-amino-acid polypeptide reads, in one-letter code: MFMSTDEVRRAFLSFFESKGHQIVESSSLVPANDPTLLFTNAGMNQFKDCFLGLEKRAYTRATTAQRCVRAGGKHNDLENVGFTARHHTFFEMLGNFSFGDYFKEDAIQYAWEFLTDVLQLPKERLLVTVYETDDEAFDIWNKKVGIPADRIIRIGDKKGGKKFDSDNFWQMGDTGPCGPCTEIFYDHGDHIWGGPPGSPEEDGDRFIEIWNNVFMQFNRHADGTMEPLPKPSVDTGMGIERISAIMQGVHSNYEIDVFQTLIKAAADAIGYQDLTNQSLRVVADHIRSCAFLIVDGVMPSNEGRGYVLRRIIRRAVRHGNKLGAQGAFFHKLVGPLAEVMGTAGVELKKQQALVEKVLRIEEENFGRTLDRGMSILNDALDQLSGQVLDGETVFKLYDTYGFPADLTNDVARERGFSIDEAGFEQAMEEQRQRAREAGQFGTDYNSLIKSATNTEFCGYTASRGQSVVREMFVEGAEVSTLSAGDKAIIVLDNTPFYAESGGQCGDTGVLKTDAGIFHVEDTQKLGNAIAHHGVIAQGVLATGDQVDAIVDEKRRAAISLNHSATHLLHAALRKVLGEHVAQKGSLVRAETLRFDFSHLEAMTAAEIKEVERLVNQEVRRNHSIETNIMNIDEAKAKGAMALFGEKYDDQVRVLSMGDFSTELCGGIHASNTGDIGLFKIISEGGIAAGIRRIEAVTGEGALDYLDAQQAQHDAKVSEMAAKAKLLEKEIQQLKDKLAAKESAGLINQVKQIAGVNVLVAQLNGADNKALRGMVDDLKNQLSSGIIMLGNVAEGKVGLIAGVTNDLTNKVKAGELVNMVALQVGGKGGGRPDMAQAGGTDAHALPSALESVDAWIAERL.

4 residues coordinate Zn(2+): His563, His567, Cys665, and His669.

This sequence belongs to the class-II aminoacyl-tRNA synthetase family. The cofactor is Zn(2+).

The protein localises to the cytoplasm. The enzyme catalyses tRNA(Ala) + L-alanine + ATP = L-alanyl-tRNA(Ala) + AMP + diphosphate. Its function is as follows. Catalyzes the attachment of alanine to tRNA(Ala) in a two-step reaction: alanine is first activated by ATP to form Ala-AMP and then transferred to the acceptor end of tRNA(Ala). Also edits incorrectly charged Ser-tRNA(Ala) and Gly-tRNA(Ala) via its editing domain. The protein is Alanine--tRNA ligase of Vibrio cholerae serotype O1 (strain ATCC 39315 / El Tor Inaba N16961).